The following is a 457-amino-acid chain: L-asparaginase-like protein GL17509 (457 aa).

The first 20 residues, 1-20 (MRYLCRAQLLSLLLLPLLKA), serve as a signal peptide directing secretion. 3 disulfide bridges follow: Cys72/Cys78, Cys172/Cys188, and Cys327/Cys354.

The protein belongs to the Ntn-hydrolase family.

The sequence is that of L-asparaginase-like protein GL17509 from Drosophila persimilis (Fruit fly).